Here is an 86-residue protein sequence, read N- to C-terminus: Small ribosomal subunit protein uS15c (86 aa).

Belongs to the universal ribosomal protein uS15 family. As to quaternary structure, part of the 30S ribosomal subunit.

It localises to the plastid. This is Small ribosomal subunit protein uS15c (rps15) from Cuscuta gronovii (Common dodder).